A 120-amino-acid polypeptide reads, in one-letter code: Ribonuclease P protein component (120 aa).

The protein belongs to the RnpA family. In terms of assembly, consists of a catalytic RNA component (M1 or rnpB) and a protein subunit.

It catalyses the reaction Endonucleolytic cleavage of RNA, removing 5'-extranucleotides from tRNA precursor.. Its function is as follows. RNaseP catalyzes the removal of the 5'-leader sequence from pre-tRNA to produce the mature 5'-terminus. It can also cleave other RNA substrates such as 4.5S RNA. The protein component plays an auxiliary but essential role in vivo by binding to the 5'-leader sequence and broadening the substrate specificity of the ribozyme. This is Ribonuclease P protein component from Desulfotalea psychrophila (strain LSv54 / DSM 12343).